We begin with the raw amino-acid sequence, 214 residues long: Membrane-spanning 4-domains subfamily A member 3 (214 aa).

The interval 1 to 31 (MASHEVDNAELGSASAHGTPGSEAGPEELNT) is disordered. Residues 1–49 (MASHEVDNAELGSASAHGTPGSEAGPEELNTSVYQPIDGSPDYQKAKLQ) are Cytoplasmic-facing. Residues 50-70 (VLGAIQILNAAMILALGVFLG) traverse the membrane as a helical segment. The Extracellular segment spans residues 71 to 81 (SLQYPYHFQKH). Residues 82–102 (FFFFTFYTGYPIWGAVFFCSS) traverse the membrane as a helical segment. At 103–124 (GTLSVVAGIKPTRTWIQNSFGM) the chain is on the cytoplasmic side. The helical transmembrane segment at 125–145 (NIASATIALVGTAFLSLNIAV) threads the bilayer. The Extracellular portion of the chain corresponds to 146-175 (NIQSLRSCHSSSESPDLCNYMGSISNGMVS). The chain crosses the membrane as a helical span at residues 176-196 (LLLILTLLELCVTISTIAMWC). Residues 197 to 214 (NANCCNSREEISSPPNSV) are Cytoplasmic-facing.

Belongs to the MS4A family. As to quaternary structure, interacts with CDKN3. Interacts with CDKN3-CDK2 complexes through its binding to CDKN3; this interaction facilitates dissociation of cyclin A from CDKN3-CDK2 complexes. Expressed specifically in hematopoietic cells and tissues.

The protein resides in the endomembrane system. The protein localises to the cytoplasm. It localises to the perinuclear region. In terms of biological role, hematopoietic modulator for the G1-S cell cycle transition. Modulates the level of phosphorylation of cyclin-dependent kinase 2 (CDK2) through its direct binding to cyclin-dependent kinase inhibitor 3 (CDKN3/KAP). The polypeptide is Membrane-spanning 4-domains subfamily A member 3 (MS4A3) (Homo sapiens (Human)).